The following is a 160-amino-acid chain: MRVGLFAVGRLKSGPEKDLAARYFDRFAKAGPAVGLELARIAETAESRASNAETRKREEAAILLKSLAEGSVLILLDERGKALDSEAFANLLGAYRDQGKRDLMIAIGGADGLDPALYDRADVTLCLGKMTWPHQLVRTLIAEQLYRAVTILSGHPYHRV.

Residues leucine 76, glycine 108, and 127–132 each bind S-adenosyl-L-methionine; that span reads LGKMTW.

This sequence belongs to the RNA methyltransferase RlmH family. In terms of assembly, homodimer.

The protein localises to the cytoplasm. It carries out the reaction pseudouridine(1915) in 23S rRNA + S-adenosyl-L-methionine = N(3)-methylpseudouridine(1915) in 23S rRNA + S-adenosyl-L-homocysteine + H(+). Its function is as follows. Specifically methylates the pseudouridine at position 1915 (m3Psi1915) in 23S rRNA. This chain is Ribosomal RNA large subunit methyltransferase H, found in Rhizobium etli (strain CIAT 652).